The following is a 387-amino-acid chain: 8-amino-7-oxononanoate synthase (387 aa).

109-110 (GY) is a binding site for pyridoxal 5'-phosphate. Residue H134 coordinates substrate. 3 residues coordinate pyridoxal 5'-phosphate: S182, H214, and T242. Residue K245 is modified to N6-(pyridoxal phosphate)lysine. A substrate-binding site is contributed by T359.

Belongs to the class-II pyridoxal-phosphate-dependent aminotransferase family. BioF subfamily. Homodimer. Requires pyridoxal 5'-phosphate as cofactor.

It catalyses the reaction 6-carboxyhexanoyl-[ACP] + L-alanine + H(+) = (8S)-8-amino-7-oxononanoate + holo-[ACP] + CO2. The protein operates within cofactor biosynthesis; biotin biosynthesis. Catalyzes the decarboxylative condensation of pimeloyl-[acyl-carrier protein] and L-alanine to produce 8-amino-7-oxononanoate (AON), [acyl-carrier protein], and carbon dioxide. This chain is 8-amino-7-oxononanoate synthase, found in Haemophilus ducreyi (strain 35000HP / ATCC 700724).